We begin with the raw amino-acid sequence, 249 residues long: Methyltransferase 1 (249 aa).

Belongs to the FkbM methyltransferase family.

It functions in the pathway secondary metabolite biosynthesis. Its function is as follows. Methyltransferase; part of the pathway that mediates the biosynthesis of tenellin-type 2-pyridones, iron-chelating compounds involved in iron stress tolerance, competition with the natural competitor fungus Metarhizium robertsii and insect hosts infection. Methylates pyridovericin-N-O-(beta-D-glucopyranoside) produced by the UDP-glucosyltransferase GT1 to yield pyridovericin-N-O-(4-O-methyl-beta-D-glucopyranoside) (PMGP). The pathway begins with the assembly of the polyketide-amino acid backbone by the hybrid PKS-NRPS tenS with the help of the enoyl reductase tenC. These enzymes catalyze the synthesis of the pyrrolidine-2-dione intermediates pretellinin A, 11-hydropretellenin A, 12-hydropretellenin A, 13-hydropretellenin A, 14-hydropretellenin A, 12-oxopretellenin A and prototellinin D. The cytochrome P450 monooxygenase tenA then catalyzes an oxidative ring expansion of pretenellin A and 14-hydropretellenin A to form the 2-pyridone core, leading to pretenellin B and pyridovericin, respectively. The cytochrome P450 monooxygenase tenB is then required for the selective N-hydroxylation of the 2-pyridone nitrogen of yield tellinin and 15-hydroxytellenin (15-HT), respectively. The UDP-glucosyltransferase GT1 and the methyltransferase MT1, located outside the tenS gene cluster, contribute to the stepwise glycosylation and methylation of 15-HT to obtain the glycoside pyridovericin-N-O-(4-O-methyl-beta-D-glucopyranoside) (PMGP). Additional related compounds such as 1-O-methyl-15-HT, (8Z)-1-O-methyl-15-HT, and O-methyltenellin A are also produced but the enzymes involved in their biosynthesis have still to be determined. This chain is Methyltransferase 1, found in Beauveria bassiana (strain ARSEF 2860) (White muscardine disease fungus).